The primary structure comprises 350 residues: MSTWRASLGNTILVFCLKVFQNSRALFLRTFGLPFARYLNFILPSEFKMSLNGFGEHTRSASHAGSWYNANQRDLDRQLTKWLDNAGPRIGTARALISPHAGYSYCGETAAYAFKQVVSSAVERVFILGPSHVVALNGCAITTCSKYRTPLGDLIVDHKINEELRATRHFDLMDRRDEESEHSIEMQLPFIAKVMGSKRYTIVPVLVGSLPGSRQQTYGNIFAHYMEDPRNLFVISSDFCHWGERFSFSPYDRHSSIPIYEQITNMDKQGMSAIETLNPAAFNDYLKKTQNTICGRNPILIMLQAAEHFRISNNHTHEFRFLHYTQSNKVRSSVDSSVSYASGVLFVHPN.

Belongs to the MEMO1 family. In terms of assembly, interacts with rho-1. Expressed in neuronal and non-neuronal cells in the head and tail, pharyngeal cells, spermatheca, distal tip cells, anchor cell and the intestine.

In terms of biological role, plays a role in the oxidative stress response and the maintenance of longevity by regulating the interaction between GTPase rho-1 and oxidase bli-3. In turn, this serves to modulate bli-3 activity and the control of reactive oxygen species production. May control cell migration by relaying extracellular chemotactic signals to the microtubule cytoskeleton. The sequence is that of Protein memo-1 homolog from Caenorhabditis elegans.